Here is a 375-residue protein sequence, read N- to C-terminus: Putative monooxygenase Rv1533 (375 aa).

FMN is bound by residues Gln-190, Gly-195, Gly-224, and 243–246 (WCGS).

This sequence belongs to the nitronate monooxygenase family. The cofactor is FMN.

In Mycobacterium tuberculosis (strain ATCC 25618 / H37Rv), this protein is Putative monooxygenase Rv1533.